We begin with the raw amino-acid sequence, 418 residues long: 3-phosphoshikimate 1-carboxyvinyltransferase (418 aa).

3 residues coordinate 3-phosphoshikimate: Lys-26, Ser-27, and Arg-31. Lys-26 is a phosphoenolpyruvate binding site. Residues Gly-97 and Arg-125 each coordinate phosphoenolpyruvate. 3-phosphoshikimate is bound by residues Ser-170, Ser-171, Gln-172, Asp-297, Asn-320, and Lys-324. Phosphoenolpyruvate is bound at residue Gln-172. The active-site Proton acceptor is the Asp-297. Phosphoenolpyruvate is bound by residues Arg-328, Arg-375, and Lys-400.

This sequence belongs to the EPSP synthase family. In terms of assembly, monomer.

Its subcellular location is the cytoplasm. The enzyme catalyses 3-phosphoshikimate + phosphoenolpyruvate = 5-O-(1-carboxyvinyl)-3-phosphoshikimate + phosphate. The protein operates within metabolic intermediate biosynthesis; chorismate biosynthesis; chorismate from D-erythrose 4-phosphate and phosphoenolpyruvate: step 6/7. In terms of biological role, catalyzes the transfer of the enolpyruvyl moiety of phosphoenolpyruvate (PEP) to the 5-hydroxyl of shikimate-3-phosphate (S3P) to produce enolpyruvyl shikimate-3-phosphate and inorganic phosphate. This chain is 3-phosphoshikimate 1-carboxyvinyltransferase, found in Pseudomonas savastanoi pv. phaseolicola (strain 1448A / Race 6) (Pseudomonas syringae pv. phaseolicola (strain 1448A / Race 6)).